The primary structure comprises 83 residues: Large ribosomal subunit protein eL43 (83 aa).

4 residues coordinate Zn(2+): Cys-38, Cys-41, Cys-56, and Cys-59. The segment at 38-59 (CPVCGRRAVRRISTGIWQCKKC) adopts a C4-type zinc-finger fold.

The protein belongs to the eukaryotic ribosomal protein eL43 family. Putative zinc-binding subfamily. As to quaternary structure, part of the 50S ribosomal subunit. Zn(2+) is required as a cofactor.

Binds to the 23S rRNA. The chain is Large ribosomal subunit protein eL43 from Pyrococcus abyssi (strain GE5 / Orsay).